The following is a 521-amino-acid chain: GMP synthase [glutamine-hydrolyzing] (521 aa).

The Glutamine amidotransferase type-1 domain maps to 9 to 203 (KILILDFGSQ…ISGICQCEKN (195 aa)). C86 serves as the catalytic Nucleophile. Residues H177 and E179 contribute to the active site. Positions 204–396 (WTTDNIIAKL…LSIPPHIIYR (193 aa)) constitute a GMPS ATP-PPase domain. Residue 231-237 (SGGVDSL) coordinates ATP.

In terms of assembly, homodimer.

The enzyme catalyses XMP + L-glutamine + ATP + H2O = GMP + L-glutamate + AMP + diphosphate + 2 H(+). It functions in the pathway purine metabolism; GMP biosynthesis; GMP from XMP (L-Gln route): step 1/1. Its function is as follows. Catalyzes the synthesis of GMP from XMP. This Ruthia magnifica subsp. Calyptogena magnifica protein is GMP synthase [glutamine-hydrolyzing].